Here is a 621-residue protein sequence, read N- to C-terminus: Pentatricopeptide repeat-containing protein At3g48250, chloroplastic (621 aa).

A chloroplast-targeting transit peptide spans 1–67 (MYRSMAILSS…SKPDSMLQLV (67 aa)). PPR repeat units lie at residues 122 to 156 (STPL…GFYL), 157 to 194 (DEDT…NAMS), 262 to 296 (STVT…GYDM), 297 to 331 (DLDT…PFKP), 332 to 368 (SIQD…GKSL), 369 to 403 (SKAV…GYEP), 404 to 438 (DNIT…GCFP), 439 to 473 (DIKT…GFDI), 474 to 509 (DSNL…NVKP), and 510 to 544 (WQST…NYPA).

This sequence belongs to the PPR family. P subfamily.

It localises to the plastid. Its subcellular location is the chloroplast. The protein is Pentatricopeptide repeat-containing protein At3g48250, chloroplastic of Arabidopsis thaliana (Mouse-ear cress).